We begin with the raw amino-acid sequence, 404 residues long: Glycosylated lysosomal membrane protein (404 aa).

Residues 1–35 (MFRCWGPHWGWVPCAPTPWLLLSLLVCSAPFGLQG) form the signal peptide. Residues 36 to 370 (EETRQVSMEV…VDIFSPLVLG (335 aa)) are Lumenal-facing. Asparagine 64, asparagine 85, asparagine 94, asparagine 133, asparagine 157, asparagine 166, asparagine 185, asparagine 228, and asparagine 331 each carry an N-linked (GlcNAc...) asparagine glycan. The chain crosses the membrane as a helical span at residues 371–391 (IMAVALGAPGLMFLGGGLFLL). Residues 392 to 404 (LRHRRYSEYQSIN) lie on the Cytoplasmic side of the membrane. Positions 400 to 404 (YQSIN) match the Lysosomal targeting motif motif.

It belongs to the GLMP family. Interacts (via lumenal domain) with lysosomal protein MFSD1; the interaction starts while both proteins are still in the endoplasmic reticulum and is required for stabilization of MFSD1 in lysosomes but has no direct effect on its targeting to lysosomes or transporter activity. In terms of processing, highly N-glycosylated. N-glycosylation is essential for GLMP stability and for MFSD1 lysosomal localization. Detected in brain, heart, liver, kidney, lung, intestine, testis and spleen. Expressed at highest levels in kidney cortex. However, another study reports highest expression levels in lung. Expressed in myoblasts with expression increasing during differentiation into myotubes.

It localises to the lysosome membrane. Functionally, required to protect lysosomal transporter MFSD1 from lysosomal proteolysis and for MFSD1 lysosomal localization. In Mus musculus (Mouse), this protein is Glycosylated lysosomal membrane protein.